Here is a 1082-residue protein sequence, read N- to C-terminus: Carbamoyl phosphate synthase large chain (1082 aa).

A carboxyphosphate synthetic domain region spans residues 1–401; it reads MPKDKALKKV…ALLKAVRSLE (401 aa). R129, R169, G175, G176, K208, V210, E215, G241, I242, H243, Q284, and E298 together coordinate ATP. The region spanning 133 to 327 is the ATP-grasp 1 domain; the sequence is KNMCLEIGEP…IAKVATKVAV (195 aa). The Mg(2+) site is built by Q284, E298, and N300. Mn(2+) is bound by residues Q284, E298, and N300. The segment at 402 to 561 is oligomerization domain; that stretch reads TGVTGMNLPE…YSTYEDEDEA (160 aa). The carbamoyl phosphate synthetic domain stretch occupies residues 562 to 944; the sequence is EPQAVRKVVV…ALYKACLSAG (383 aa). The 191-residue stretch at 686-876 folds into the ATP-grasp 2 domain; the sequence is DQLVAELGIP…MVNLATRICL (191 aa). 10 residues coordinate ATP: R722, K761, L763, E767, G792, I793, H794, S795, Q835, and E847. Mg(2+) is bound by residues Q835, E847, and N849. Mn(2+) is bound by residues Q835, E847, and N849. Residues 945–1082 enclose the MGS-like domain; the sequence is YTLPSSGKAV…PLIPLQEYVS (138 aa). The interval 945 to 1082 is allosteric domain; the sequence is YTLPSSGKAV…PLIPLQEYVS (138 aa).

The protein belongs to the CarB family. As to quaternary structure, composed of two chains; the small (or glutamine) chain promotes the hydrolysis of glutamine to ammonia, which is used by the large (or ammonia) chain to synthesize carbamoyl phosphate. Tetramer of heterodimers (alpha,beta)4. It depends on Mg(2+) as a cofactor. Requires Mn(2+) as cofactor.

The catalysed reaction is hydrogencarbonate + L-glutamine + 2 ATP + H2O = carbamoyl phosphate + L-glutamate + 2 ADP + phosphate + 2 H(+). The enzyme catalyses hydrogencarbonate + NH4(+) + 2 ATP = carbamoyl phosphate + 2 ADP + phosphate + 2 H(+). It participates in amino-acid biosynthesis; L-arginine biosynthesis; carbamoyl phosphate from bicarbonate: step 1/1. It functions in the pathway pyrimidine metabolism; UMP biosynthesis via de novo pathway; (S)-dihydroorotate from bicarbonate: step 1/3. Large subunit of the glutamine-dependent carbamoyl phosphate synthetase (CPSase). CPSase catalyzes the formation of carbamoyl phosphate from the ammonia moiety of glutamine, carbonate, and phosphate donated by ATP, constituting the first step of 2 biosynthetic pathways, one leading to arginine and/or urea and the other to pyrimidine nucleotides. The large subunit (synthetase) binds the substrates ammonia (free or transferred from glutamine from the small subunit), hydrogencarbonate and ATP and carries out an ATP-coupled ligase reaction, activating hydrogencarbonate by forming carboxy phosphate which reacts with ammonia to form carbamoyl phosphate. This is Carbamoyl phosphate synthase large chain from Desulforudis audaxviator (strain MP104C).